The primary structure comprises 57 residues: Preprotein translocase subunit SecG (57 aa).

Topologically, residues 1-31 (MAKKKGEGPGLMSSAGLMRYFESEETSIKLD) are cytoplasmic. Residues 32-53 (PKMVIGAGIASGVAIMALNITF) traverse the membrane as a helical segment. Over 54–57 (GLWP) the chain is Extracellular.

Belongs to the SEC61-beta family. As to quaternary structure, component of the protein translocase complex. Heterotrimer consisting of alpha (SecY), beta (SecG) and gamma (SecE) subunits. Can form oligomers of the heterotrimer.

It is found in the cell membrane. Involved in protein export. The function of the beta subunit is unknown, but it may be involved in stabilization of the trimeric complex. In Methanothrix thermoacetophila (strain DSM 6194 / JCM 14653 / NBRC 101360 / PT) (Methanosaeta thermophila), this protein is Preprotein translocase subunit SecG.